The sequence spans 456 residues: UDP-N-acetylmuramate--L-alanine ligase (456 aa).

117 to 123 lines the ATP pocket; sequence GTHGKTT.

The protein belongs to the MurCDEF family.

It localises to the cytoplasm. The catalysed reaction is UDP-N-acetyl-alpha-D-muramate + L-alanine + ATP = UDP-N-acetyl-alpha-D-muramoyl-L-alanine + ADP + phosphate + H(+). Its pathway is cell wall biogenesis; peptidoglycan biosynthesis. Functionally, cell wall formation. This Clostridium tetani (strain Massachusetts / E88) protein is UDP-N-acetylmuramate--L-alanine ligase.